Here is a 317-residue protein sequence, read N- to C-terminus: Beta-ketoacyl-[acyl-carrier-protein] synthase III (317 aa).

Residues Cys-112 and His-244 contribute to the active site. Residues 245 to 249 (QANLR) are ACP-binding. Residue Asn-274 is part of the active site.

This sequence belongs to the thiolase-like superfamily. FabH family. As to quaternary structure, homodimer.

The protein resides in the cytoplasm. The catalysed reaction is malonyl-[ACP] + acetyl-CoA + H(+) = 3-oxobutanoyl-[ACP] + CO2 + CoA. It functions in the pathway lipid metabolism; fatty acid biosynthesis. In terms of biological role, catalyzes the condensation reaction of fatty acid synthesis by the addition to an acyl acceptor of two carbons from malonyl-ACP. Catalyzes the first condensation reaction which initiates fatty acid synthesis and may therefore play a role in governing the total rate of fatty acid production. Possesses both acetoacetyl-ACP synthase and acetyl transacylase activities. Its substrate specificity determines the biosynthesis of branched-chain and/or straight-chain of fatty acids. In Salmonella typhi, this protein is Beta-ketoacyl-[acyl-carrier-protein] synthase III.